The primary structure comprises 208 residues: Protein DEHYDRATION-INDUCED 19 homolog 6 (208 aa).

A disordered region spans residues 151–190; it reads VDSPRRSEADAEGHGSSSSDDQKRREQGVMDDASKEELEE. 2 stretches are compositionally biased toward basic and acidic residues: residues 153 to 163 and 170 to 190; these read SPRRSEADAEG and DDQKRREQGVMDDASKEELEE.

This sequence belongs to the Di19 family.

The polypeptide is Protein DEHYDRATION-INDUCED 19 homolog 6 (DI19-6) (Oryza sativa subsp. japonica (Rice)).